A 372-amino-acid polypeptide reads, in one-letter code: Putative neuropeptide precursor protein (372 aa).

Residues 1-17 (MLLFSLTAITAVLAVSA) form the signal peptide. Disordered stretches follow at residues 18–89 (VPTP…SNGE) and 136–208 (VTKS…KRDS). Over residues 19-31 (PTPSNNKDGSTIS) the composition is skewed to polar residues. The segment covering 38-57 (DQTKDDNRSLFLNKSDKNDL) has biased composition (basic and acidic residues). Polar residues predominate over residues 72–89 (GYDQTVDQRFDSPQSNGE). Over residues 177-191 (GGAAASAKTATKNSG) the composition is skewed to low complexity.

May be proteolytically processed to give rise to a number of active peptides. Detected in the brain and frontal ganglion and in the axons connecting to the corpus cardiacum and corpus allatum (at protein level). Detected in the brain-subesophageal ganglion (brain-SG) complex, fat body, midgut and ovary. Expression in the brain-SG complex is 2-3 times higher than in the other tissues.

Its subcellular location is the cytoplasm. It localises to the secreted. This Bombyx mori (Silk moth) protein is Putative neuropeptide precursor protein.